Reading from the N-terminus, the 283-residue chain is Bifunctional protein FolD (283 aa).

NADP(+) contacts are provided by residues 166–168 and I232; that span reads GAS.

This sequence belongs to the tetrahydrofolate dehydrogenase/cyclohydrolase family. As to quaternary structure, homodimer.

It carries out the reaction (6R)-5,10-methylene-5,6,7,8-tetrahydrofolate + NADP(+) = (6R)-5,10-methenyltetrahydrofolate + NADPH. It catalyses the reaction (6R)-5,10-methenyltetrahydrofolate + H2O = (6R)-10-formyltetrahydrofolate + H(+). The protein operates within one-carbon metabolism; tetrahydrofolate interconversion. Catalyzes the oxidation of 5,10-methylenetetrahydrofolate to 5,10-methenyltetrahydrofolate and then the hydrolysis of 5,10-methenyltetrahydrofolate to 10-formyltetrahydrofolate. This chain is Bifunctional protein FolD, found in Wigglesworthia glossinidia brevipalpis.